A 147-amino-acid chain; its full sequence is Hemoglobin subunit gamma (147 aa).

Positions 3–147 constitute a Globin domain; that stretch reads DFTAEEKAAI…VASAVARKYH (145 aa). Heme b is bound by residues His-64 and His-93.

This sequence belongs to the globin family. As to quaternary structure, heterotetramer of two alpha chains and two gamma chains in fetal hemoglobin (Hb F). In terms of tissue distribution, red blood cells.

Its function is as follows. Gamma chains make up the fetal hemoglobin F, in combination with alpha chains. The chain is Hemoglobin subunit gamma (HBG) from Trichechus manatus (Caribbean manatee).